Reading from the N-terminus, the 119-residue chain is Methylglyoxal synthase (119 aa).

One can recognise an MGS-like domain in the interval 1–119; the sequence is MKIALIAHDK…ESAKLIMADI (119 aa). Substrate-binding positions include H8, K12, 34-37, and 54-55; these read TGTT and SG. Catalysis depends on D60, which acts as the Proton donor/acceptor. A substrate-binding site is contributed by H87.

It belongs to the methylglyoxal synthase family.

It carries out the reaction dihydroxyacetone phosphate = methylglyoxal + phosphate. Functionally, catalyzes the formation of methylglyoxal from dihydroxyacetone phosphate. The protein is Methylglyoxal synthase of Clostridium perfringens (strain 13 / Type A).